The primary structure comprises 248 residues: Probable transcriptional regulatory protein SO_2432 (248 aa).

The protein belongs to the TACO1 family.

Its subcellular location is the cytoplasm. The sequence is that of Probable transcriptional regulatory protein SO_2432 from Shewanella oneidensis (strain ATCC 700550 / JCM 31522 / CIP 106686 / LMG 19005 / NCIMB 14063 / MR-1).